A 154-amino-acid polypeptide reads, in one-letter code: 6,7-dimethyl-8-ribityllumazine synthase (154 aa).

Residues phenylalanine 22, 56–58, and 80–82 contribute to the 5-amino-6-(D-ribitylamino)uracil site; these read AFE and TVI. Residue 85–86 participates in (2S)-2-hydroxy-3-oxobutyl phosphate binding; that stretch reads AT. Histidine 88 (proton donor) is an active-site residue. Phenylalanine 113 contacts 5-amino-6-(D-ribitylamino)uracil. Arginine 127 lines the (2S)-2-hydroxy-3-oxobutyl phosphate pocket.

Belongs to the DMRL synthase family. Forms an icosahedral capsid composed of 60 subunits, arranged as a dodecamer of pentamers.

The catalysed reaction is (2S)-2-hydroxy-3-oxobutyl phosphate + 5-amino-6-(D-ribitylamino)uracil = 6,7-dimethyl-8-(1-D-ribityl)lumazine + phosphate + 2 H2O + H(+). It participates in cofactor biosynthesis; riboflavin biosynthesis; riboflavin from 2-hydroxy-3-oxobutyl phosphate and 5-amino-6-(D-ribitylamino)uracil: step 1/2. Functionally, catalyzes the formation of 6,7-dimethyl-8-ribityllumazine by condensation of 5-amino-6-(D-ribitylamino)uracil with 3,4-dihydroxy-2-butanone 4-phosphate. This is the penultimate step in the biosynthesis of riboflavin. The polypeptide is 6,7-dimethyl-8-ribityllumazine synthase (Bacillus amyloliquefaciens (Bacillus velezensis)).